Reading from the N-terminus, the 99-residue chain is Small ribosomal subunit protein cS23 (99 aa).

This sequence belongs to the chloroplast-specific ribosomal protein cS23 family. Part of the 30S ribosomal subunit.

It localises to the plastid. The protein localises to the chloroplast. Probably a ribosomal protein or a ribosome-associated protein. This Gracilaria tenuistipitata var. liui (Red alga) protein is Small ribosomal subunit protein cS23.